A 642-amino-acid polypeptide reads, in one-letter code: Threonine--tRNA ligase (642 aa).

A TGS domain is found at 1–61 (MPIITLPDGS…TEDAELQLIT (61 aa)). Positions 242-535 (DHRKLGKSLD…LVEHYEGKFP (294 aa)) are catalytic. Residues Cys-333, His-384, and His-512 each coordinate Zn(2+).

It belongs to the class-II aminoacyl-tRNA synthetase family. In terms of assembly, homodimer. Requires Zn(2+) as cofactor.

The protein resides in the cytoplasm. The catalysed reaction is tRNA(Thr) + L-threonine + ATP = L-threonyl-tRNA(Thr) + AMP + diphosphate + H(+). Catalyzes the attachment of threonine to tRNA(Thr) in a two-step reaction: L-threonine is first activated by ATP to form Thr-AMP and then transferred to the acceptor end of tRNA(Thr). Also edits incorrectly charged L-seryl-tRNA(Thr). The sequence is that of Threonine--tRNA ligase from Hydrogenovibrio crunogenus (strain DSM 25203 / XCL-2) (Thiomicrospira crunogena).